The sequence spans 263 residues: Purine nucleoside phosphorylase SACOL1200 (263 aa).

H79, C124, and H141 together coordinate Zn(2+).

It belongs to the purine nucleoside phosphorylase YfiH/LACC1 family. As to quaternary structure, homodimer. It depends on Cu(2+) as a cofactor. Zn(2+) serves as cofactor.

It catalyses the reaction adenosine + phosphate = alpha-D-ribose 1-phosphate + adenine. The enzyme catalyses S-methyl-5'-thioadenosine + phosphate = 5-(methylsulfanyl)-alpha-D-ribose 1-phosphate + adenine. It carries out the reaction inosine + phosphate = alpha-D-ribose 1-phosphate + hypoxanthine. The catalysed reaction is adenosine + H2O + H(+) = inosine + NH4(+). Functionally, purine nucleoside enzyme that catalyzes the phosphorolysis of adenosine and inosine nucleosides, yielding D-ribose 1-phosphate and the respective free bases, adenine and hypoxanthine. Also catalyzes the phosphorolysis of S-methyl-5'-thioadenosine into adenine and S-methyl-5-thio-alpha-D-ribose 1-phosphate. Also has adenosine deaminase activity. The chain is Purine nucleoside phosphorylase SACOL1200 from Staphylococcus aureus (strain COL).